The sequence spans 1209 residues: DNA-directed RNA polymerase subunit beta (1209 aa).

Positions 1173–1192 (QQEKKKLAEEAAKKDDKPDE) are enriched in basic and acidic residues. The tract at residues 1173–1209 (QQEKKKLAEEAAKKDDKPDEPVDESDSSTSSDDKVSK) is disordered.

Belongs to the RNA polymerase beta chain family. The RNAP catalytic core consists of 2 alpha, 1 beta, 1 beta' and 1 omega subunit. When a sigma factor is associated with the core the holoenzyme is formed, which can initiate transcription.

It carries out the reaction RNA(n) + a ribonucleoside 5'-triphosphate = RNA(n+1) + diphosphate. Its function is as follows. DNA-dependent RNA polymerase catalyzes the transcription of DNA into RNA using the four ribonucleoside triphosphates as substrates. This Lactobacillus johnsonii (strain CNCM I-12250 / La1 / NCC 533) protein is DNA-directed RNA polymerase subunit beta.